Here is a 349-residue protein sequence, read N- to C-terminus: UPF0284 protein MA_3887 (349 aa).

It belongs to the UPF0284 family.

The chain is UPF0284 protein MA_3887 from Methanosarcina acetivorans (strain ATCC 35395 / DSM 2834 / JCM 12185 / C2A).